Reading from the N-terminus, the 236-residue chain is MNKKYFKKYSSILIFSMSILAPMTLASCSYNLAKEKDKDQKESTNLSEPNKSNTSKTNTFQDKKDSTNKIDSQESSKTQSQNTSESNQNTKVDSSKTNNLATNQNNPSKSNVNIQETNETKQEQNINPNNAVISEKQAENDKNASSLNSKQINNTLKNQDKTKQENDQFKQESKDSSNFTSPKPITHDPINKVISSQSTTRLEMPKNDQSNSESEDNKKSPESPKWWEKLNQGDAF.

Residues 1-27 (MNKKYFKKYSSILIFSMSILAPMTLAS) form the signal peptide. Cysteine 28 carries the N-palmitoyl cysteine lipid modification. Cysteine 28 carries the S-diacylglycerol cysteine lipid modification. Disordered regions lie at residues 35-112 (EKDK…KSNV) and 134-236 (SEKQ…GDAF). Residues 43–60 (STNLSEPNKSNTSKTNTF) show a composition bias toward polar residues. Positions 61-74 (QDKKDSTNKIDSQE) are enriched in basic and acidic residues. 2 stretches are compositionally biased toward polar residues: residues 75 to 112 (SSKT…KSNV) and 143 to 157 (NASS…NTLK). Basic and acidic residues predominate over residues 158–175 (NQDKTKQENDQFKQESKD). The span at 193–212 (VISSQSTTRLEMPKNDQSNS) shows a compositional bias: polar residues. The span at 215 to 228 (EDNKKSPESPKWWE) shows a compositional bias: basic and acidic residues.

The protein belongs to the M.pulmonis LipAB lipoprotein family.

It localises to the cell membrane. The chain is Lipoprotein B (lipB) from Mycoplasmopsis pulmonis (strain UAB CTIP) (Mycoplasma pulmonis).